Reading from the N-terminus, the 1175-residue chain is MNPAFAQPMMRPNLPLRRPATGPSSLSPRGPAPAIYEERLLASDVLDGPKIDTMRKDISQNCGDVLSSPQTAVSMMGQVVKLCNYCSHQGNLRCTRCKKTCYCSVACQTQDWIAHRHVCKPSIPEVTSEKPKESKAVPYANGLGGTQAKEISVDAQPKRIYRRDLHKKVVSKGSEIKGTVIDLRNPGMFSIHCQCEEMIESLKKITQQLQKTYCSSFAQEYKPEVGELCAVKFSLDQNWYRAEIQAVDVARKTAGVFYIDFGNEENVALDHIRPLSENIDAVPPFALQCCIAGVKPLTGSWTGECCIAVRQLIAGKSLTFTVLDIMNDGDLLAVDSLVSTLGKHVSTFLIDQSYAIKEDVPVKTQTEHSISSLLTASFENFKRFSGGKNENSEARPPEPLTQGVGDSFTAVVTHLQSPSEILCQKLENASIIQQLQMNLRVHCSNTAASDDFRPAPGTVCCSLFSEDNQWYRAKVLAYSSEDRVCVGYIDFGNSEEVELNRLRPISKELLALATQAIPCSLAGIKSLTDTWSDEAVLMLKHLVCNRFIRVEILGKKDGRALVSMIDESSDPQASVTELLVNMGFAAIESVETKKNEPDPATSTEIPLSQPVVEKLEWTGAELPFDGQKVELVISTLKSLDEFYCYNYSKTDEHTLTEMSFELMKHCESERAPFTPIVGEPCCALFTGDARWYRAMVLEVCGEGKARVCFVDYGNSCEVDAAHLKAITQSLLKLPFQAIRCWLAGVEPVEGQWKKEAMLRFQALCAGQPLSGKVLSITEKGYGMELESAGQTVASVLISEHLAKPYGQVRQPPQIQPAKPASQIEDLPSLKPIDQNPSVEEPLKVSSKGAATTPEDLPVSSGCFPLNWKTLELSCSGTFQPRVAAVISPSLFYIMNPGQVNVEGLKAVMTDVAKYCSKQPVPNQCHPLPGASCCAQFSGDKNWYRAVVLEVTTKHAHVIYSDYGNMETVPLSSILPITKELLQHPFQIVRCALTGKEHFPVVWPTEVLELFGIQLSGGVLASFQGFDGTSNLLTLTQQSGQSDRDINSIILGALQKGQIKPSSKLPANVNEEKKDVEQKQTQPISSNKAVEQTLSTNVEKPALDDQTLPLSVSLKHEEPENMSKTKTAEECTSTPDTVSSIESSHAAQSCCCQELKQKMDRIEELVLLLVKQVGSR.

Residues 1-32 (MNPAFAQPMMRPNLPLRRPATGPSSLSPRGPA) are disordered. The span at 8 to 19 (PMMRPNLPLRRP) shows a compositional bias: low complexity. Zn(2+)-binding residues include Cys83, Cys86, Cys94, Cys97, Cys103, Cys107, His115, and Cys119. Residues 83–119 (CNYCSHQGNLRCTRCKKTCYCSVACQTQDWIAHRHVC) form an MYND-type zinc finger. Tudor domains are found at residues 222-282 (KPEV…IDAV), 453-512 (RPAP…LLAL), and 674-733 (TPIV…LLKL). Positions 827 to 852 (PSLKPIDQNPSVEEPLKVSSKGAATT) are disordered. The 59-residue stretch at 925–983 (HPLPGASCCAQFSGDKNWYRAVVLEVTTKHAHVIYSDYGNMETVPLSSILPITKELLQH) folds into the Tudor 4 domain. Disordered regions lie at residues 1060–1089 (PSSK…NKAV) and 1115–1136 (HEEP…TPDT). Residues 1078-1089 (KQTQPISSNKAV) are compositionally biased toward polar residues. Residues 1115-1128 (HEEPENMSKTKTAE) show a composition bias toward basic and acidic residues.

The protein belongs to the TDRD1 family.

The protein resides in the cytoplasm. Its function is as follows. Plays a central role during spermatogenesis by participating in the repression transposable elements and preventing their mobilization, which is essential for the germline integrity. Acts via the piRNA metabolic process, which mediates the repression of transposable elements during meiosis by forming complexes composed of piRNAs and Piwi proteins and governs the methylation and subsequent repression of transposons. Required for the localization of Piwi proteins to the meiotic nuage. Involved in the piRNA metabolic process by ensuring the entry of correct transcripts into the normal piRNA pool and limiting the entry of cellular transcripts into the piRNA pathway. May act by allowing the recruitment of piRNA biogenesis or loading factors that ensure the correct entry of transcripts and piRNAs into Piwi proteins. This chain is Tudor domain-containing protein 1 (tdrd1), found in Danio rerio (Zebrafish).